The sequence spans 545 residues: CTP synthase (545 aa).

Residues 1-266 form an amidoligase domain region; that stretch reads MATNYIFVTG…DTFVCDRFRL (266 aa). Ser-14 lines the CTP pocket. UTP is bound at residue Ser-14. ATP-binding positions include 15-20 and Asp-72; that span reads SLGKGI. Residues Asp-72 and Glu-140 each coordinate Mg(2+). CTP-binding positions include 147 to 149, 187 to 192, and Lys-223; these read DIE and KTKPTQ. UTP-binding positions include 187-192 and Lys-223; that span reads KTKPTQ. 239–241 lines the ATP pocket; sequence KDV. Positions 291–542 constitute a Glutamine amidotransferase type-1 domain; that stretch reads TIGMVGKYVE…VKAAKDYQDS (252 aa). Gly-352 provides a ligand contact to L-glutamine. The active-site Nucleophile; for glutamine hydrolysis is the Cys-379. L-glutamine contacts are provided by residues 380-383, Glu-403, and Arg-470; that span reads LGMQ. Residues His-515 and Glu-517 contribute to the active site.

This sequence belongs to the CTP synthase family. As to quaternary structure, homotetramer.

It catalyses the reaction UTP + L-glutamine + ATP + H2O = CTP + L-glutamate + ADP + phosphate + 2 H(+). The catalysed reaction is L-glutamine + H2O = L-glutamate + NH4(+). It carries out the reaction UTP + NH4(+) + ATP = CTP + ADP + phosphate + 2 H(+). Its pathway is pyrimidine metabolism; CTP biosynthesis via de novo pathway; CTP from UDP: step 2/2. Its activity is regulated as follows. Allosterically activated by GTP, when glutamine is the substrate; GTP has no effect on the reaction when ammonia is the substrate. The allosteric effector GTP functions by stabilizing the protein conformation that binds the tetrahedral intermediate(s) formed during glutamine hydrolysis. Inhibited by the product CTP, via allosteric rather than competitive inhibition. Catalyzes the ATP-dependent amination of UTP to CTP with either L-glutamine or ammonia as the source of nitrogen. Regulates intracellular CTP levels through interactions with the four ribonucleotide triphosphates. This is CTP synthase from Actinobacillus pleuropneumoniae serotype 7 (strain AP76).